The primary structure comprises 215 residues: Methylthioribulose-1-phosphate dehydratase (215 aa).

Residues histidine 103 and histidine 105 each coordinate Zn(2+).

The protein belongs to the aldolase class II family. MtnB subfamily. Zn(2+) is required as a cofactor.

The enzyme catalyses 5-(methylsulfanyl)-D-ribulose 1-phosphate = 5-methylsulfanyl-2,3-dioxopentyl phosphate + H2O. It participates in amino-acid biosynthesis; L-methionine biosynthesis via salvage pathway; L-methionine from S-methyl-5-thio-alpha-D-ribose 1-phosphate: step 2/6. Functionally, catalyzes the dehydration of methylthioribulose-1-phosphate (MTRu-1-P) into 2,3-diketo-5-methylthiopentyl-1-phosphate (DK-MTP-1-P). The protein is Methylthioribulose-1-phosphate dehydratase of Sulfurihydrogenibium sp. (strain YO3AOP1).